A 214-amino-acid chain; its full sequence is Large ribosomal subunit protein uL16-like (214 aa).

This sequence belongs to the universal ribosomal protein uL16 family. Component of a male germ cell-specific 60S large ribosomal subunit (LSU), which contains RPL10L and RPL39L, instead of RPL10 and RPL39 paralogs. The composition of the rest of the complex is similar to classical ribosomes. As to expression, testis-specific.

The protein resides in the cytoplasm. In terms of biological role, testis-specific component of the ribosome, which is required for the transition from prophase to metaphase in male meiosis I. Compensates for the inactivated X-linked RPL10 paralog during spermatogenesis. The ribosome is a large ribonucleoprotein complex responsible for the synthesis of proteins in the cell. The male germ cell-specific ribosome displays a ribosomal polypeptide exit tunnel of distinct size and charge states compared with the classical ribosome. It is responsible for regulating the biosynthesis and folding of a subset of male germ-cell-specific proteins that are essential for the formation of sperm. In Mus musculus (Mouse), this protein is Large ribosomal subunit protein uL16-like.